Here is a 376-residue protein sequence, read N- to C-terminus: Erythronate-4-phosphate dehydrogenase (376 aa).

Residues S45 and T67 each coordinate substrate. An NAD(+)-binding site is contributed by D147. R209 is an active-site residue. D233 contacts NAD(+). E238 is a catalytic residue. Catalysis depends on H255, which acts as the Proton donor. G258 is an NAD(+) binding site. Residue Y259 coordinates substrate.

Belongs to the D-isomer specific 2-hydroxyacid dehydrogenase family. PdxB subfamily. Homodimer.

It localises to the cytoplasm. It carries out the reaction 4-phospho-D-erythronate + NAD(+) = (R)-3-hydroxy-2-oxo-4-phosphooxybutanoate + NADH + H(+). Its pathway is cofactor biosynthesis; pyridoxine 5'-phosphate biosynthesis; pyridoxine 5'-phosphate from D-erythrose 4-phosphate: step 2/5. Its function is as follows. Catalyzes the oxidation of erythronate-4-phosphate to 3-hydroxy-2-oxo-4-phosphonooxybutanoate. The chain is Erythronate-4-phosphate dehydrogenase from Shewanella sp. (strain W3-18-1).